The sequence spans 365 residues: Putative agmatine deiminase (365 aa).

Catalysis depends on Cys356, which acts as the Amidino-cysteine intermediate.

This sequence belongs to the agmatine deiminase family.

The enzyme catalyses agmatine + H2O = N-carbamoylputrescine + NH4(+). This chain is Putative agmatine deiminase, found in Latilactobacillus sakei subsp. sakei (strain 23K) (Lactobacillus sakei subsp. sakei).